Here is a 130-residue protein sequence, read N- to C-terminus: Small ribosomal subunit protein uS11 (130 aa).

The protein belongs to the universal ribosomal protein uS11 family. In terms of assembly, part of the 30S ribosomal subunit. Interacts with proteins S7 and S18. Binds to IF-3.

Located on the platform of the 30S subunit, it bridges several disparate RNA helices of the 16S rRNA. Forms part of the Shine-Dalgarno cleft in the 70S ribosome. This chain is Small ribosomal subunit protein uS11, found in Shewanella amazonensis (strain ATCC BAA-1098 / SB2B).